A 283-amino-acid polypeptide reads, in one-letter code: 2-dehydro-3-deoxyphosphooctonate aldolase (283 aa).

It belongs to the KdsA family.

The protein resides in the cytoplasm. It catalyses the reaction D-arabinose 5-phosphate + phosphoenolpyruvate + H2O = 3-deoxy-alpha-D-manno-2-octulosonate-8-phosphate + phosphate. Its pathway is carbohydrate biosynthesis; 3-deoxy-D-manno-octulosonate biosynthesis; 3-deoxy-D-manno-octulosonate from D-ribulose 5-phosphate: step 2/3. The protein operates within bacterial outer membrane biogenesis; lipopolysaccharide biosynthesis. The protein is 2-dehydro-3-deoxyphosphooctonate aldolase of Vibrio cholerae serotype O1 (strain ATCC 39315 / El Tor Inaba N16961).